A 210-amino-acid chain; its full sequence is MKIVEVRHPLVQHKIGLMRNAALSTKDFRELANELGTLLAYEATADLDTEPHTLAGWAGPVTVQRIAGAKITVVPILRAGLGMLSGVLSLIPAARVSVVGLQRDEETLQPVPYFERLTGRLEERDALILDPMLATGGTLIATIDMLKRAGARRIKGIFLVAAPEGIEAVKAVHPDVEIYTAAIDAQLNDKGYILPGLGDAGDRIFGTRVG.

5-phospho-alpha-D-ribose 1-diphosphate contacts are provided by residues R78, R103, and 130 to 138; that span reads DPMLATGGT. Residues I193 and 198 to 200 each bind uracil; that span reads GDA. D199 serves as a coordination point for 5-phospho-alpha-D-ribose 1-diphosphate.

It belongs to the UPRTase family. It depends on Mg(2+) as a cofactor.

It catalyses the reaction UMP + diphosphate = 5-phospho-alpha-D-ribose 1-diphosphate + uracil. It functions in the pathway pyrimidine metabolism; UMP biosynthesis via salvage pathway; UMP from uracil: step 1/1. Allosterically activated by GTP. Its function is as follows. Catalyzes the conversion of uracil and 5-phospho-alpha-D-ribose 1-diphosphate (PRPP) to UMP and diphosphate. This chain is Uracil phosphoribosyltransferase, found in Stenotrophomonas maltophilia (strain K279a).